Reading from the N-terminus, the 93-residue chain is Large ribosomal subunit protein bL27 (93 aa).

The tract at residues 1–22 (MAHKKAGGSSRNGRDSEGRRLG) is disordered.

This sequence belongs to the bacterial ribosomal protein bL27 family.

The chain is Large ribosomal subunit protein bL27 from Methylobacterium sp. (strain 4-46).